The primary structure comprises 228 residues: UPF0758 protein CLI_3057 (228 aa).

The 123-residue stretch at 106 to 228 folds into the MPN domain; it reads KINTPLDVSN…YVSMKEKGTI (123 aa). 3 residues coordinate Zn(2+): His177, His179, and Asp190. The JAMM motif motif lies at 177 to 190; it reads HNHPSGDPTPSKED.

Belongs to the UPF0758 family.

The sequence is that of UPF0758 protein CLI_3057 from Clostridium botulinum (strain Langeland / NCTC 10281 / Type F).